Consider the following 242-residue polypeptide: ADP-dependent L-serine kinase SerK (242 aa).

Residue Glu-30 is part of the active site. Residues Ser-43, Ile-49, Trp-51, and Lys-52 each coordinate ADP. Val-68 provides a ligand contact to O-phospho-L-serine. ADP contacts are provided by Asp-69, Gly-70, His-71, His-72, and Arg-73. Position 69 (Asp-69) interacts with Mg(2+). Residues Gly-70, His-71, and His-72 each coordinate O-phospho-L-serine. O-phospho-L-serine-binding residues include Trp-102, Lys-221, Thr-223, and His-225.

The protein belongs to the SerK family. The cofactor is Mg(2+).

It catalyses the reaction L-serine + ADP = O-phospho-L-serine + AMP + H(+). The protein operates within amino-acid biosynthesis; L-cysteine biosynthesis; L-cysteine from L-serine: step 1/2. Free serine kinase that uses ADP to phosphorylate L-serine to yield O-phospho-L-serine and AMP. This chain is ADP-dependent L-serine kinase SerK, found in Thermococcus kodakarensis (strain ATCC BAA-918 / JCM 12380 / KOD1) (Pyrococcus kodakaraensis (strain KOD1)).